The primary structure comprises 448 residues: Maltoporin (448 aa).

Positions 1-25 (MMITLRKLPLAVAVMAGIFAAQASA) are cleaved as a signal peptide.

This sequence belongs to the porin LamB (TC 1.B.3) family. As to quaternary structure, homotrimer formed of three 18-stranded antiparallel beta-barrels, containing three independent channels.

The protein resides in the cell outer membrane. It carries out the reaction beta-maltose(in) = beta-maltose(out). Functionally, involved in the transport of maltose and maltodextrins. The protein is Maltoporin of Cronobacter sakazakii (strain ATCC BAA-894) (Enterobacter sakazakii).